The primary structure comprises 645 residues: MAALMNGFGSLQCKATVHVEKGHMQASGMAFFSPVNRCAQVHISSIPHFIGAKSVSASQLRMRHKVGSIRASAASCLQDETTKYFDFVVIGSGVAGLRYALEVSKYGSVAIITKAEPHESNTNYAQGGVSAVLCPSDSVESHMQDTIVAGAYLCDEETVRVVCTEGPERVKELIAMGASFDHGEDGRLHLAREGGHSHNRIVHSADMTGREIERALLQAVDNDDNISLFGHHFAIDLLTCQSNGEIYCYGVDSLDAETQKAIRFISKVTLLASGGVGHIYPSTTNPPVATGDGIAMSHRAQAVISNMEFVQFHPTALSDEGLPIKPATRRENAFLITEAVRGDGGILYNQSMERFMTSYDDRAELAPRDVVARSIDDQLKKRGEKYVLLDISHKPREKVLAHFPNIAAECLRHGLDITQQPIPVVPAAHYMCGGVRAGLQGETNVKGLYVAGEVACTGLHGANRLASNSLLEALVFARRAVQPSIDHMVDADVDPSFAKKWARPVLSVSLRDSILSDIIEKTKQARMELQSIMWEYVGIVRSTNRLKHAEWKISDLESEWEEFLFRRGWKPTMVGVETCEMRNLFCCAKLVVKSALARHESRGLHFTEDFPYLEESKRKPTVIFPTHIQELTWSSKPLQKQLQCK.

The transit peptide at 1-70 directs the protein to the chloroplast; it reads MAALMNGFGS…RMRHKVGSIR (70 aa). FAD contacts are provided by residues 92–95, Lys114, 121–128, and Asp292; these read SGVA and NTNYAQGG. Arg368 serves as the catalytic Proton donor/acceptor. FAD-binding positions include Glu453 and 469–470; that span reads SL.

This sequence belongs to the FAD-dependent oxidoreductase 2 family. NadB subfamily. Requires FAD as cofactor.

Its subcellular location is the plastid. The protein localises to the chloroplast. The catalysed reaction is L-aspartate + O2 = iminosuccinate + H2O2. It participates in cofactor biosynthesis; NAD(+) biosynthesis; iminoaspartate from L-aspartate (oxidase route): step 1/1. Its function is as follows. Catalyzes the oxidation of L-aspartate to iminoaspartate. The protein is L-aspartate oxidase, chloroplastic of Oryza sativa subsp. japonica (Rice).